We begin with the raw amino-acid sequence, 66 residues long: Sarcoplasmic/endoplasmic reticulum calcium ATPase regulator ARLN (66 aa).

Position 1 is an N-acetylmethionine (Met-1). A disordered region spans residues Met-1–Gly-38. Positions Asp-9–Leu-20 are enriched in basic and acidic residues. The helical transmembrane segment at Trp-45–Leu-65 threads the bilayer.

In terms of assembly, homooligomer. Can also form heterooligomers with other sarcoplasmic/endoplasmic reticulum calcium ATPase (SERCA) regulators ERLN, PLN, SLN and STRIT1/DWORF. Monomer. Interacts as a monomer with ATP2A2/SERCA2; the interaction results in inhibition of ATP2A2 Ca(2+) affinity.

The protein localises to the endoplasmic reticulum membrane. Inhibits the activity of the calcium ATPases ATP2A2/SERCA2 and ATP2A3/SERCA3 by decreasing their apparent affinity for Ca(2+). This is Sarcoplasmic/endoplasmic reticulum calcium ATPase regulator ARLN (ARLN) from Pongo abelii (Sumatran orangutan).